The primary structure comprises 124 residues: Small ribosomal subunit protein uS12c (124 aa).

The protein belongs to the universal ribosomal protein uS12 family. Part of the 30S ribosomal subunit.

It is found in the plastid. The protein resides in the chloroplast. Its function is as follows. With S4 and S5 plays an important role in translational accuracy. Located at the interface of the 30S and 50S subunits. This Cyanidium caldarium (Red alga) protein is Small ribosomal subunit protein uS12c (rps12).